Reading from the N-terminus, the 142-residue chain is Gene 46 protein (142 aa).

Residues 82–101 (KALAQVKPETGPSRPNRKKL) are disordered.

The polypeptide is Gene 46 protein (46) (Mycobacterium (Mycobacteriophage L5)).